The primary structure comprises 242 residues: Biosynthetic peptidoglycan transglycosylase (242 aa).

The helical transmembrane segment at 19–39 (ILAALAVFWGGGIALFSVVPV) threads the bilayer.

Belongs to the glycosyltransferase 51 family.

It localises to the cell inner membrane. It carries out the reaction [GlcNAc-(1-&gt;4)-Mur2Ac(oyl-L-Ala-gamma-D-Glu-L-Lys-D-Ala-D-Ala)](n)-di-trans,octa-cis-undecaprenyl diphosphate + beta-D-GlcNAc-(1-&gt;4)-Mur2Ac(oyl-L-Ala-gamma-D-Glu-L-Lys-D-Ala-D-Ala)-di-trans,octa-cis-undecaprenyl diphosphate = [GlcNAc-(1-&gt;4)-Mur2Ac(oyl-L-Ala-gamma-D-Glu-L-Lys-D-Ala-D-Ala)](n+1)-di-trans,octa-cis-undecaprenyl diphosphate + di-trans,octa-cis-undecaprenyl diphosphate + H(+). It functions in the pathway cell wall biogenesis; peptidoglycan biosynthesis. Functionally, peptidoglycan polymerase that catalyzes glycan chain elongation from lipid-linked precursors. The protein is Biosynthetic peptidoglycan transglycosylase of Salmonella choleraesuis (strain SC-B67).